A 406-amino-acid chain; its full sequence is Serine/threonine transporter SstT (406 aa).

The next 9 helical transmembrane spans lie at 15-35 (LVIQILVGIILGISLALVSPS), 47-67 (FVGALKAIAPILVFILVAASI), 81-101 (IIVMYLAGTFFAALTAVVLSF), 140-160 (ALMSANYIGILAWGVGLGLAL), 191-211 (FGIFGLVASTFATTGFDALAG), 215-235 (LLVVLLSAMAIIALIVNPAMV), 289-309 (IPLGATINMAGAAITITTLTL), 315-335 (MGIEVDLMTALLLSVVAAVSA), and 362-382 (IAMQVVAVGFIIGVIQDSAET).

It belongs to the dicarboxylate/amino acid:cation symporter (DAACS) (TC 2.A.23) family.

Its subcellular location is the cell inner membrane. It carries out the reaction L-serine(in) + Na(+)(in) = L-serine(out) + Na(+)(out). It catalyses the reaction L-threonine(in) + Na(+)(in) = L-threonine(out) + Na(+)(out). In terms of biological role, involved in the import of serine and threonine into the cell, with the concomitant import of sodium (symport system). In Vibrio vulnificus (strain YJ016), this protein is Serine/threonine transporter SstT.